The following is a 737-amino-acid chain: Genome polyprotein (737 aa).

Position 2 is an N-acetylserine; by host (Ser2). An interaction with STAT1 region spans residues 2–23 (STNPKPQRKTKRNTNRRPQDVK). The segment at 2 to 58 (STNPKPQRKTKRNTNRRPQDVKFPGGGQIVGGVYLLPRRGPRLGVRATRKTSERSQP) is interaction with EIF2AK2/PKR. Positions 2–59 (STNPKPQRKTKRNTNRRPQDVKFPGGGQIVGGVYLLPRRGPRLGVRATRKTSERSQPR) are interaction with DDX3X. Positions 2–75 (STNPKPQRKT…PKDRRSTGKS (74 aa)) are disordered. Over 2–168 (STNPKPQRKT…EDGINYATGN (167 aa)) the chain is Cytoplasmic. Short sequence motifs (nuclear localization signal) lie at residues 5 to 13 (PKPQRKTKR) and 38 to 43 (PRRGPR). Basic residues predominate over residues 7–16 (PQRKTKRNTN). Over residues 32–47 (GGVYLLPRRGPRLGVR) the composition is skewed to low complexity. Phosphoserine; by host is present on Ser53. 2 short sequence motifs (nuclear localization signal) span residues 58–64 (PRGRRQP) and 66–71 (PKDRRS). Residues Ser99 and Ser116 each carry the phosphoserine; by host modification. Positions 112 to 152 (PRHRSRNLGKVIDTLTCGFADLMGYIPVVGAPVGGVARALA) are important for endoplasmic reticulum and mitochondrial localization. The interaction with APOA2 stretch occupies residues 122–173 (VIDTLTCGFADLMGYIPVVGAPVGGVARALAHGVRVLEDGINYATGNLPGCS). The interval 164 to 167 (YATG) is important for lipid droplets localization. A helical transmembrane segment spans residues 169-189 (LPGCSFSIFLLALLSCVTVPV). Positions 178-191 (LLALLSCVTVPVSA) are cleaved as a propeptide — ER anchor for the core protein, removed in mature form by host signal peptidase. Residues 190–358 (SAVEVRNISS…FGGHWGVVFG (169 aa)) are Lumenal-facing. 3 N-linked (GlcNAc...) asparagine; by host glycosylation sites follow: Asn196, Asn209, and Asn233. The interval 265–296 (IVMAATVCSALYVGDICGAVMIASQAFIISPE) is important for fusion. Asn305 is a glycosylation site (N-linked (GlcNAc...) asparagine; by host). A helical membrane pass occupies residues 359 to 379 (LAYFSMQGAWAKVIAILLLVA). The Lumenal segment spans residues 380 to 729 (GVDASTQVTG…WEWVILLFLL (350 aa)). The segment at 385 to 411 (TQVTGGQAAHTVRGVASIFSPGSRQDI) is HVR1. Asn417, Asn423, Asn430, and Asn448 each carry an N-linked (GlcNAc...) (high mannose) asparagine; by host glycan. Intrachain disulfides connect Cys429–Cys554, Cys452–Cys459, Cys488–Cys496, and Cys505–Cys510. Residues 474–481 (YETNVTNE) are HVR2. Residues 482–495 (EDMRPYCWHYPPKP) form a CD81-binding 1 region. N-linked (GlcNAc...) asparagine; by host glycosylation occurs at Asn542. The tract at residues 546–553 (PPRGAWFG) is CD81-binding 2. Asn558 carries an N-linked (GlcNAc...) (high mannose) asparagine; by host glycan. Cystine bridges form between Cys566–Cys571, Cys585–Cys589, Cys601–Cys624, and Cys611–Cys648. 2 N-linked (GlcNAc...) (high mannose) asparagine; by host glycosylation sites follow: Asn627 and Asn649. An intrachain disulfide couples Cys656 to Cys681. The interval 664–675 (SQQSPLLHSTTE) is PKR/eIF2-alpha phosphorylation homology domain (PePHD). The helical transmembrane segment at 730-737 (LADARVCA) threads the bilayer.

This sequence belongs to the hepacivirus polyprotein family. Homooligomer. Interacts with E1 (via C-terminus). Interacts with the non-structural protein 5A. Interacts (via N-terminus) with host STAT1 (via SH2 domain); this interaction results in decreased STAT1 phosphorylation and ubiquitin-mediated proteasome-dependent STAT1 degradation, leading to decreased IFN-stimulated gene transcription. Interacts with host STAT3; this interaction constitutively activates STAT3. Interacts with host LTBR receptor. Interacts with host TNFRSF1A receptor and possibly induces apoptosis. Interacts with host HNRPK. Interacts with host YWHAE. Interacts with host UBE3A/E6AP. Interacts with host DDX3X. Interacts with host APOA2. Interacts with host RXRA protein. Interacts with host SP110 isoform 3/Sp110b; this interaction sequesters the transcriptional corepressor SP110 away from the nucleus. Interacts with host CREB3 nuclear transcription protein; this interaction triggers cell transformation. Interacts with host ACY3. Interacts with host C1QR1. Interacts with host RBM24; this interaction, which enhances the interaction of the mature core protein with 5'-UTR, may inhibit viral translation and favor replication. Interacts with host EIF2AK2/PKR; this interaction induces the autophosphorylation of EIF2AK2. Part of the viral assembly initiation complex composed of NS2, E1, E2, NS3, NS4A, NS5A and the mature core protein. As to quaternary structure, forms a heterodimer with envelope glycoprotein E2. Interacts with mature core protein. Interacts with protease NS2. The heterodimer E1/E2 interacts with host CLDN1; this interaction plays a role in viral entry into host cell. Interacts with host SPSB2 (via C-terminus). Part of the viral assembly initiation complex composed of NS2, E1, E2, NS3, NS4A, NS5A and the mature core protein. In terms of assembly, forms a heterodimer with envelope glycoprotein E1. Interacts with host CD81 and SCARB1 receptors; these interactions play a role in viral entry into host cell. Interacts with host EIF2AK2/PKR; this interaction inhibits EIF2AK2 and probably allows the virus to evade the innate immune response. Interacts with host CD209/DC-SIGN and CLEC4M/DC-SIGNR. Interact with host SPCS1; this interaction is essential for viral particle assembly. Interacts with protease NS2. The heterodimer E1/E2 interacts with host CLDN1; this interaction plays a role in viral entry into host cell. Part of the viral assembly initiation complex composed of NS2, E1, E2, NS3, NS4A, NS5A and the mature core protein. In terms of processing, specific enzymatic cleavages in vivo yield mature proteins. The structural proteins, core, E1, E2 and p7 are produced by proteolytic processing by host signal peptidases. The core protein precursor is synthesized as a 23 kDa, which is retained in the ER membrane through the hydrophobic signal peptide. Cleavage by the signal peptidase releases the 21 kDa mature core protein. The cleavage of the core protein precursor occurs between aminoacids 176 and 188 but the exact cleavage site is not known. Some degraded forms of the core protein appear as well during the course of infection. The other proteins (p7, NS2, NS3, NS4A, NS4B, NS5A and NS5B) are cleaved by the viral proteases. Autoprocessing between NS2 and NS3 is mediated by the NS2 cysteine protease catalytic domain and regulated by the NS3 N-terminal domain. Post-translationally, phosphorylated by host PKC and PKA. Ubiquitinated; mediated by UBE3A and leading to core protein subsequent proteasomal degradation. In terms of processing, highly N-glycosylated.

It localises to the host endoplasmic reticulum membrane. The protein resides in the host mitochondrion membrane. Its subcellular location is the virion. It is found in the host cytoplasm. The protein localises to the host nucleus. It localises to the host lipid droplet. The protein resides in the virion membrane. Its function is as follows. Packages viral RNA to form a viral nucleocapsid, and promotes virion budding. Participates in the viral particle production as a result of its interaction with the non-structural protein 5A. Binds RNA and may function as a RNA chaperone to induce the RNA structural rearrangements taking place during virus replication. Modulates viral translation initiation by interacting with viral IRES and 40S ribosomal subunit. Affects various cell signaling pathways, host immunity and lipid metabolism. Prevents the establishment of cellular antiviral state by blocking the interferon-alpha/beta (IFN-alpha/beta) and IFN-gamma signaling pathways and by blocking the formation of phosphorylated STAT1 and promoting ubiquitin-mediated proteasome-dependent degradation of STAT1. Activates STAT3 leading to cellular transformation. Regulates the activity of cellular genes, including c-myc and c-fos. May repress the promoter of p53, and sequester CREB3 and SP110 isoform 3/Sp110b in the cytoplasm. Represses cell cycle negative regulating factor CDKN1A, thereby interrupting an important check point of normal cell cycle regulation. Targets transcription factors involved in the regulation of inflammatory responses and in the immune response: suppresses TNF-induced NF-kappa-B activation, and activates AP-1. Binds to dendritic cells (DCs) via C1QR1, resulting in down-regulation of T-lymphocytes proliferation. Alters lipid metabolism by interacting with hepatocellular proteins involved in lipid accumulation and storage. Induces up-regulation of FAS promoter activity, and thereby contributes to the increased triglyceride accumulation in hepatocytes (steatosis). Functionally, forms a heterodimer with envelope glycoprotein E2, which mediates virus attachment to the host cell, virion internalization through clathrin-dependent endocytosis and fusion with host membrane. Fusion with the host cell is most likely mediated by both E1 and E2, through conformational rearrangements of the heterodimer required for fusion rather than a classical class II fusion mechanism. E1/E2 heterodimer binds host apolipoproteins such as APOB and ApoE thereby forming a lipo-viro-particle (LVP). APOE associated to the LVP allows the initial virus attachment to cell surface receptors such as the heparan sulfate proteoglycans (HSPGs), syndecan-1 (SDC1), syndecan-1 (SDC2), the low-density lipoprotein receptor (LDLR) and scavenger receptor class B type I (SCARB1). The cholesterol transfer activity of SCARB1 allows E2 exposure and binding of E2 to SCARB1 and the tetraspanin CD81. E1/E2 heterodimer binding on CD81 activates the epithelial growth factor receptor (EGFR) signaling pathway. Diffusion of the complex E1-E2-EGFR-SCARB1-CD81 to the cell lateral membrane allows further interaction with Claudin 1 (CLDN1) and occludin (OCLN) to finally trigger HCV entry. In terms of biological role, forms a heterodimer with envelope glycoprotein E1, which mediates virus attachment to the host cell, virion internalization through clathrin-dependent endocytosis and fusion with host membrane. Fusion with the host cell is most likely mediated by both E1 and E2, through conformational rearrangements of the heterodimer required for fusion rather than a classical class II fusion mechanism. The interaction between envelope glycoprotein E2 and host apolipoprotein E/APOE allows the proper assembly, maturation and infectivity of the viral particles. This interaction is probably promoted via the up-regulation of cellular autophagy by the virus. E1/E2 heterodimer binds host apolipoproteins such as APOB and APOE thereby forming a lipo-viro-particle (LVP). APOE associated to the LVP allows the initial virus attachment to cell surface receptors such as the heparan sulfate proteoglycans (HSPGs), syndecan-1 (SDC1), syndecan-1 (SDC2), the low-density lipoprotein receptor (LDLR) and scavenger receptor class B type I (SCARB1). The cholesterol transfer activity of SCARB1 allows E2 exposure and binding of E2 to SCARB1 and the tetraspanin CD81. E1/E2 heterodimer binding on CD81 activates the epithelial growth factor receptor (EGFR) signaling pathway. Diffusion of the complex E1-E2-EGFR-SCARB1-CD81 to the cell lateral membrane allows further interaction with Claudin 1 (CLDN1) and occludin (OCLN) to finally trigger HCV entry. Inhibits host EIF2AK2/PKR activation, preventing the establishment of an antiviral state. Viral ligand for CD209/DC-SIGN and CLEC4M/DC-SIGNR, which are respectively found on dendritic cells (DCs), and on liver sinusoidal endothelial cells and macrophage-like cells of lymph node sinuses. These interactions allow the capture of circulating HCV particles by these cells and subsequent facilitated transmission to permissive cells such as hepatocytes and lymphocyte subpopulations. This chain is Genome polyprotein, found in Hepatitis C virus (isolate HC-J7) (HCV).